The following is a 374-amino-acid chain: Probable tRNA pseudouridine synthase D (374 aa).

The active-site Nucleophile is the D81. The TRUD domain maps to 141–340 (VFPNYFDVQR…RKGFQKMYDL (200 aa)).

This sequence belongs to the pseudouridine synthase TruD family.

The catalysed reaction is uridine(13) in tRNA = pseudouridine(13) in tRNA. Functionally, could be responsible for synthesis of pseudouridine from uracil-13 in transfer RNAs. In Nanoarchaeum equitans (strain Kin4-M), this protein is Probable tRNA pseudouridine synthase D.